The sequence spans 114 residues: Acetyltransferase At1g77540 (114 aa).

Thr2 is subject to N-acetylthreonine. The N-acetyltransferase domain maps to 18 to 106 (KIVWNEGKRR…RNPSWKPLIH (89 aa)). CoA contacts are provided by residues 52–55 (HTYV) and 61–66 (GLGLAS). Cys87 functions as the Nucleophile in the catalytic mechanism. CoA is bound by residues 88–89 (SY), Thr93, and Arg97.

The protein resides in the peroxisome. Its function is as follows. Possesses in vitro histone acetyltransferase activity with histones H3 and H4. The sequence is that of Acetyltransferase At1g77540 from Arabidopsis thaliana (Mouse-ear cress).